A 126-amino-acid polypeptide reads, in one-letter code: UPF0102 protein DNO_0639 (126 aa).

Belongs to the UPF0102 family.

The chain is UPF0102 protein DNO_0639 from Dichelobacter nodosus (strain VCS1703A).